The chain runs to 539 residues: MAAAASELLTGWFLFGLALLAILIFSWVYVRKYQSRRESEVISTVTAIFALAVALISSALLPVDIFLVSYMKNQNGTFKDWADANVSRQIEDTVLYGYYTLYSIILFCVFLWIPFVYFYYEEKEEDDGNTCSQVKTALKYTLGFITVCAVLLLIGAFVPLDIPNKKNSTEWEKVKLLFEEFGSSHGLTALSFSISSLTVIGMLAAITYTAYGMSALPLNLIKGTTSAAYERLENTEDIEEVEQRILRIKSKCRDGRPLSSRDRRAVQQLEERLRTLRRRERHLETIEKSWWLKFCEAIRPLKIVWGVFFIIVALLFTVSLFLSNLDKALHSAGFDSGFIILGTNLTNPLNMLLPVLQTVFPLDYILITTIVMYFIFTSMAGIRNMGIWFFWIRLYKIRRGKTRPQALLFLCMILLLIVLHTSYMIYSLAPQYVMYGSQKYLVQSNKTIDGQPKNVTTFVAKDCDADAPEDQCIVTRTYLFLHKFWFFSAVYYFGNWAFIAVFLIGLIVSCCKGKKSVIEGEVDEDDSDMSDDELSAYYC.

The Extracellular segment spans residues M1–E7. The helical transmembrane segment at L8 to V28 threads the bilayer. At Y29–A47 the chain is on the cytoplasmic side. Residues I48–V68 form a helical membrane-spanning segment. The Extracellular segment spans residues S69–G97. Residues N75 and N85 are each glycosylated (N-linked (GlcNAc...) asparagine). A helical membrane pass occupies residues Y98–F118. At Y119 to T141 the chain is on the cytoplasmic side. A helical membrane pass occupies residues L142 to I162. The Extracellular segment spans residues P163–H185. Residue N167 is glycosylated (N-linked (GlcNAc...) asparagine). A helical membrane pass occupies residues G186–I206. At T207–K302 the chain is on the cytoplasmic side. A helical transmembrane segment spans residues I303–S323. The Extracellular portion of the chain corresponds to N324–P361. An N-linked (GlcNAc...) asparagine glycan is attached at N344. A helical membrane pass occupies residues L362–I382. The Cytoplasmic portion of the chain corresponds to R383–Q405. Residues A406–Y426 form a helical membrane-spanning segment. The Extracellular segment spans residues S427–K483. Residues N445 and N454 are each glycosylated (N-linked (GlcNAc...) asparagine). The helical transmembrane segment at F484–I504 threads the bilayer. Topologically, residues G505–C539 are cytoplasmic.

The protein belongs to the LIMR family. LMBRD1 subfamily.

It localises to the endoplasmic reticulum membrane. The protein resides in the lysosome membrane. The protein localises to the cell membrane. Functionally, lysosomal membrane chaperone required to export cobalamin (vitamin B12) from the lysosome to the cytosol, allowing its conversion to cofactors. Targets ABCD4 transporter from the endoplasmic reticulum to the lysosome. Then forms a complex with lysosomal ABCD4 and cytoplasmic MMACHC to transport cobalamin across the lysosomal membrane. May play a role in mediating and regulating the internalization of the insulin receptor. The chain is Lysosomal cobalamin transport escort protein LMBD1 (LMBRD1) from Gallus gallus (Chicken).